The primary structure comprises 285 residues: MKLKLRWKGHQRFLTRQNSLVGFIWSPLKNTFSKRNSILNNQVCFEAIKYIQRHYFSSQSHHVTYLHQSPLEKLVSNGVVNENGDLTMDSLSHQIYLLHKNRPTLPLKPTNQPTRFASVLMPLVNTSQGASLLLTQRSPNLRSHAGQMCFPGGRVEPSDGSHYYAALRETYEEIGFLPNFFTYLTTFPPLFTRDEKTEIRAYLAFSVQTSLPSLGTGEVKDLFYVPLTSFLNPKHQKISRFRNTDLLYVEFNIDKIPRIWGITAVILNMYLNSICPDALISIPKF.

Positions 114–254 (TRFASVLMPL…DLLYVEFNID (141 aa)) constitute a Nudix hydrolase domain. A Nudix box motif is present at residues 153 to 175 (GRVEPSDGSHYYAALRETYEEIG). Mg(2+)-binding residues include Glu169 and Glu173.

Belongs to the Nudix hydrolase family. PCD1 subfamily. Mn(2+) is required as a cofactor. The cofactor is Mg(2+).

Probably mediates the hydrolysis of some nucleoside diphosphate derivatives. This chain is Probable nudix hydrolase C6G9.05, found in Schizosaccharomyces pombe (strain 972 / ATCC 24843) (Fission yeast).